The chain runs to 258 residues: Enoyl-[acyl-carrier-protein] reductase [NADH] FabI (258 aa).

Residues Gly-14, 20 to 21 (SI), 67 to 68 (DV), and Ile-95 each bind NAD(+). Ala-98 is a binding site for substrate. Catalysis depends on proton acceptor residues Tyr-148 and Tyr-158. Residues Lys-165 and 194–198 (IRTLS) contribute to the NAD(+) site.

The protein belongs to the short-chain dehydrogenases/reductases (SDR) family. FabI subfamily. Homotetramer.

The catalysed reaction is a 2,3-saturated acyl-[ACP] + NAD(+) = a (2E)-enoyl-[ACP] + NADH + H(+). It carries out the reaction (2E)-butenoyl-[ACP] + NADH + H(+) = butanoyl-[ACP] + NAD(+). It participates in lipid metabolism; fatty acid biosynthesis. Inhibited by triclosan and acrylamide. Catalyzes the reduction of a carbon-carbon double bond in an enoyl moiety that is covalently linked to an acyl carrier protein (ACP). Involved in the elongation cycle of fatty acid which are used in the lipid metabolism. This chain is Enoyl-[acyl-carrier-protein] reductase [NADH] FabI (fabI), found in Bacillus subtilis (strain 168).